A 243-amino-acid polypeptide reads, in one-letter code: Vesicle-associated membrane protein-associated protein B (243 aa).

N-acetylalanine is present on Ala2. Topologically, residues 2 to 218 (AKVEQVLSLE…PASAMAGKEE (217 aa)) are cytoplasmic. Positions 7–124 (VLSLEPQHEL…MDSKLRCVFE (118 aa)) constitute an MSP domain. Ser146 is modified (phosphoserine). Residue Lys147 forms a Glycyl lysine isopeptide (Lys-Gly) (interchain with G-Cter in SUMO1) linkage. Thr150 is modified (phosphothreonine). Ser158, Ser159, and Ser160 each carry phosphoserine. Positions 161 to 196 (LDDTEVKKVMEECKRLQSEVQRLREENKQFKEEDGL) form a coiled coil. The span at 186-197 (ENKQFKEEDGLR) shows a compositional bias: basic and acidic residues. A disordered region spans residues 186-214 (ENKQFKEEDGLRMRKTAQSNSPAPASAMA). Ser206 carries the phosphoserine modification. Residues 219-239 (GLSTRLLALVVLFFIVGVIIG) form a helical; Anchor for type IV membrane protein membrane-spanning segment.

The protein belongs to the VAMP-associated protein (VAP) (TC 9.B.17) family. In terms of assembly, homodimer, and heterodimer with VAPA. Interacts with VAMP1 and VAMP2. Interacts (via MSP domain) with ZFYVE27. Interacts with RMDN3. Interacts with KIF5A in a ZFYVE27-dependent manner. Interacts (via MSP domain) with STARD3 (via phospho-FFAT motif). Interacts with STARD3NL (via FFAT motif). Interacts with CERT1. Interacts with PLEKHA3 and SACM1L to form a ternary complex. Interacts with VPS13A (via FFAT motif). Interacts with RB1CC1 (via phosphorylated FFAT motif), MIGA2 (via phosphorylated FFAT motif), RMDN3 (via phosphorylated FFAT motif), OSBPL1A (via FFAT motif), KCNB1 (via phosphorylated FFAT motif) and KCNB2 (via phosphorylated FFAT motif). Interacts (via MSP domain) with WDR44 (via FFAT motif); the interactions connect the endoplasmic reticulum (ER) with the endosomal tubule.

The protein resides in the endoplasmic reticulum membrane. Its function is as follows. Endoplasmic reticulum (ER)-anchored protein that mediates the formation of contact sites between the ER and endosomes via interaction with FFAT motif-containing proteins such as STARD3 or WDR44. Interacts with STARD3 in a FFAT motif phosphorylation dependent manner. Via interaction with WDR44 participates in neosynthesized protein export. Participates in the endoplasmic reticulum unfolded protein response (UPR) by inducing ERN1/IRE1 activity. Involved in cellular calcium homeostasis regulation. The sequence is that of Vesicle-associated membrane protein-associated protein B from Bos taurus (Bovine).